The chain runs to 141 residues: Galactose-6-phosphate isomerase subunit LacA (141 aa).

The protein belongs to the LacAB/RpiB family. In terms of assembly, heteromultimeric protein consisting of LacA and LacB.

It catalyses the reaction aldehydo-D-galactose 6-phosphate = keto-D-tagatose 6-phosphate. The protein operates within carbohydrate metabolism; D-galactose 6-phosphate degradation; D-tagatose 6-phosphate from D-galactose 6-phosphate: step 1/1. The sequence is that of Galactose-6-phosphate isomerase subunit LacA from Streptococcus pneumoniae serotype 4 (strain ATCC BAA-334 / TIGR4).